Reading from the N-terminus, the 443-residue chain is Tryptophan synthase beta chain (443 aa).

At lysine 110 the chain carries N6-(pyridoxal phosphate)lysine.

It belongs to the TrpB family. Tetramer of two alpha and two beta chains. It depends on pyridoxal 5'-phosphate as a cofactor.

The enzyme catalyses (1S,2R)-1-C-(indol-3-yl)glycerol 3-phosphate + L-serine = D-glyceraldehyde 3-phosphate + L-tryptophan + H2O. It functions in the pathway amino-acid biosynthesis; L-tryptophan biosynthesis; L-tryptophan from chorismate: step 5/5. Functionally, the beta subunit is responsible for the synthesis of L-tryptophan from indole and L-serine. The sequence is that of Tryptophan synthase beta chain from Thermococcus onnurineus (strain NA1).